A 394-amino-acid polypeptide reads, in one-letter code: Protein TsgA homolog (394 aa).

12 consecutive transmembrane segments (helical) span residues 11 to 31 (WISY…GMVM), 51 to 71 (FLNA…EIIP), 76 to 96 (LMFG…GKSL), 101 to 121 (LCMF…TFLI), 134 to 154 (LLFT…VAAM), 162 to 182 (WYWV…LTLF), 206 to 226 (IGVL…LGFI), 251 to 271 (FWTS…FFDL), 274 to 294 (IVTI…STDN), 302 to 322 (IMAL…LGSL), 334 to 354 (FILT…GPIV), and 363 to 383 (LTTA…LGFV).

It belongs to the major facilitator superfamily. TsgA family.

It localises to the cell inner membrane. The protein is Protein TsgA homolog of Serratia proteamaculans (strain 568).